A 70-amino-acid chain; its full sequence is Cytochrome c oxidase subunit 8B, mitochondrial (70 aa).

A mitochondrion-targeting transit peptide spans 1-24 (MLRLAPTVRLLQAPLRGWAVPKAH). The Mitochondrial matrix portion of the chain corresponds to 25–35 (ITAKPAKTPTS). Residues 36 to 59 (PKEQAIGLSVTFLSFLLPAGWVLY) form a helical membrane-spanning segment. The Mitochondrial intermembrane segment spans residues 60-70 (HLDNYKKSSAA).

This sequence belongs to the cytochrome c oxidase VIII family. In terms of assembly, component of the cytochrome c oxidase (complex IV, CIV), a multisubunit enzyme composed of 14 subunits. The complex is composed of a catalytic core of 3 subunits MT-CO1, MT-CO2 and MT-CO3, encoded in the mitochondrial DNA, and 11 supernumerary subunits COX4I1 (or COX4I2), COX5A, COX5B, COX6A2 (or COX6A1), COX6B1 (or COX6B2), COX6C, COX7A1 (or COX7A2), COX7B, COX7C, COX8B and NDUFA4, which are encoded in the nuclear genome. The complex exists as a monomer or a dimer and forms supercomplexes (SCs) in the inner mitochondrial membrane with NADH-ubiquinone oxidoreductase (complex I, CI) and ubiquinol-cytochrome c oxidoreductase (cytochrome b-c1 complex, complex III, CIII), resulting in different assemblies (supercomplex SCI(1)III(2)IV(1) and megacomplex MCI(2)III(2)IV(2)).

Its subcellular location is the mitochondrion inner membrane. It functions in the pathway energy metabolism; oxidative phosphorylation. Component of the cytochrome c oxidase, the last enzyme in the mitochondrial electron transport chain which drives oxidative phosphorylation. The respiratory chain contains 3 multisubunit complexes succinate dehydrogenase (complex II, CII), ubiquinol-cytochrome c oxidoreductase (cytochrome b-c1 complex, complex III, CIII) and cytochrome c oxidase (complex IV, CIV), that cooperate to transfer electrons derived from NADH and succinate to molecular oxygen, creating an electrochemical gradient over the inner membrane that drives transmembrane transport and the ATP synthase. Cytochrome c oxidase is the component of the respiratory chain that catalyzes the reduction of oxygen to water. Electrons originating from reduced cytochrome c in the intermembrane space (IMS) are transferred via the dinuclear copper A center (CU(A)) of subunit 2 and heme A of subunit 1 to the active site in subunit 1, a binuclear center (BNC) formed by heme A3 and copper B (CU(B)). The BNC reduces molecular oxygen to 2 water molecules using 4 electrons from cytochrome c in the IMS and 4 protons from the mitochondrial matrix. The chain is Cytochrome c oxidase subunit 8B, mitochondrial (COX8B) from Bos taurus (Bovine).